A 103-amino-acid polypeptide reads, in one-letter code: Large ribosomal subunit protein bL21 (103 aa).

It belongs to the bacterial ribosomal protein bL21 family. In terms of assembly, part of the 50S ribosomal subunit. Contacts protein L20.

This protein binds to 23S rRNA in the presence of protein L20. In Hahella chejuensis (strain KCTC 2396), this protein is Large ribosomal subunit protein bL21.